The sequence spans 526 residues: CTP synthase (526 aa).

The interval 1-264 (MPQRFIVVTG…HKLIAKELDI (264 aa)) is amidoligase domain. CTP is bound at residue serine 14. Position 14 (serine 14) interacts with UTP. ATP-binding positions include 15–20 (GIGKGI) and aspartate 72. Residues aspartate 72 and glutamate 138 each coordinate Mg(2+). CTP is bound by residues 145–147 (DIE), 185–190 (KTKPTQ), and lysine 221. UTP contacts are provided by residues 185 to 190 (KTKPTQ) and lysine 221. Residues 282 to 526 (KIGIVGKYLG…VKAAGGKIND (245 aa)) form the Glutamine amidotransferase type-1 domain. Glycine 342 lines the L-glutamine pocket. Cysteine 369 serves as the catalytic Nucleophile; for glutamine hydrolysis. Residues 370–373 (LGMQ), glutamate 393, and arginine 451 each bind L-glutamine. Residues histidine 499 and glutamate 501 contribute to the active site.

This sequence belongs to the CTP synthase family. As to quaternary structure, homotetramer.

It catalyses the reaction UTP + L-glutamine + ATP + H2O = CTP + L-glutamate + ADP + phosphate + 2 H(+). The enzyme catalyses L-glutamine + H2O = L-glutamate + NH4(+). It carries out the reaction UTP + NH4(+) + ATP = CTP + ADP + phosphate + 2 H(+). It participates in pyrimidine metabolism; CTP biosynthesis via de novo pathway; CTP from UDP: step 2/2. Allosterically activated by GTP, when glutamine is the substrate; GTP has no effect on the reaction when ammonia is the substrate. The allosteric effector GTP functions by stabilizing the protein conformation that binds the tetrahedral intermediate(s) formed during glutamine hydrolysis. Inhibited by the product CTP, via allosteric rather than competitive inhibition. Its function is as follows. Catalyzes the ATP-dependent amination of UTP to CTP with either L-glutamine or ammonia as the source of nitrogen. Regulates intracellular CTP levels through interactions with the four ribonucleotide triphosphates. This chain is CTP synthase, found in Thermosipho africanus (strain TCF52B).